The following is a 921-amino-acid chain: GPI ethanolamine phosphate transferase 1 (921 aa).

Residues 37–57 (PGHVALIAGLYEDVSAVTTGW) traverse the membrane as a helical segment. N-linked (GlcNAc...) asparagine glycans are attached at residues Asn-69 and Asn-132. 10 consecutive transmembrane segments (helical) span residues 386-406 (ALIT…VIDL), 418-438 (TLIG…SFAI), 441-461 (SPLT…EVYA), 483-503 (FVSL…LALG), 509-529 (ILTI…FSFL), 533-553 (MALS…TLLP), 561-581 (VNMI…YLIL), 606-626 (LVGI…SSAL), 640-660 (VMGW…RAKP), and 679-699 (FVIL…AVLV). Residues 715 to 737 (SANGAARSAPSPAKPHNLETSQT) are disordered. The next 4 helical transmembrane spans lie at 752–772 (VALF…NVAS), 795–815 (AMLI…LGIL), 825–845 (ALFM…FWVV), and 862–882 (VIAS…AMFI).

It belongs to the PIGG/PIGN/PIGO family. PIGN subfamily.

The protein localises to the endoplasmic reticulum membrane. The protein operates within glycolipid biosynthesis; glycosylphosphatidylinositol-anchor biosynthesis. Its function is as follows. Ethanolamine phosphate transferase involved in glycosylphosphatidylinositol-anchor biosynthesis. Transfers ethanolamine phosphate to the first alpha-1,4-linked mannose of the glycosylphosphatidylinositol precursor of GPI-anchor. In Chaetomium globosum (strain ATCC 6205 / CBS 148.51 / DSM 1962 / NBRC 6347 / NRRL 1970) (Soil fungus), this protein is GPI ethanolamine phosphate transferase 1 (MCD4).